The chain runs to 156 residues: UPF0039 protein Mb2876c (156 aa).

Positions 8–150 (VWAKDLDARA…PHVPMLRPGS (143 aa)) constitute an N-acetyltransferase domain.

This sequence belongs to the UPF0039 (ElaA) family.

This is UPF0039 protein Mb2876c from Mycobacterium bovis (strain ATCC BAA-935 / AF2122/97).